Here is a 428-residue protein sequence, read N- to C-terminus: MGNCHTVGPNEALVVSGGCCGSDYKQYVFGGWAWAWWCISDTQRISLEIMTLQPRCEDVETAEGVALTVTGVAQVKIMTEKELLAVACEQFLGKSVQDIKNVVLQTLEGHLRSILGTLTVEQIYQDRDQFAKLVREVAAPDVGRMGIEILSFTIKDVYDKVDYLSSLGKTQTAVVQRDADIGVAEAERDAGIREAECKKEMLDVKFMADTKIADSKRAFELQKSAFSEEVNIKTAEAQLAYELQGAREQQKIRQEEIEIEVVQRKKQIAVEAQEILRTDKELIATVRCPAEAEAHRIQQIAEGEKVKQVLLAQAEAEKIRKIGEAEAAVIEARGKAEAERMKLKAEAYQKYGDAAKMALVLDALPRIAAKIAAPLTKVDEIVVLSGDNSKVTSEVNRLLAELPASVHALTGVDLSKIPLIKKATGAQV.

The N-myristoyl glycine moiety is linked to residue Gly-2. Cys-4 carries S-palmitoyl cysteine; by ZDHHC5 lipidation. The S-palmitoyl cysteine moiety is linked to residue Cys-19. Cys-20 is lipidated: S-palmitoyl cysteine; by ZDHHC5. Position 405 is a phosphoserine (Ser-405).

It belongs to the band 7/mec-2 family. Flotillin subfamily. In terms of assembly, heterooligomeric complex of flotillin-1 and flotillin-2 and caveolin-1 and caveolin-2. Interacts with ECPAS. In terms of processing, ZDHHC5-catalyzed palmitoylation may be required for the formation of higher-order complexes and for neurite outgrowth in cultured neural stem cells.

The protein resides in the cell membrane. Its subcellular location is the membrane. The protein localises to the caveola. It localises to the endosome. Functionally, may act as a scaffolding protein within caveolar membranes, functionally participating in formation of caveolae or caveolae-like vesicles. May be involved in epidermal cell adhesion and epidermal structure and function. The polypeptide is Flotillin-2 (FLOT2) (Bos taurus (Bovine)).